We begin with the raw amino-acid sequence, 93 residues long: MTRSSKKEPFVEEKLMRRILEMNEKNEKRMIKTWSRASVIYPEMVGHTIAVHDGRKHVPVYITESMVGHRLGEFAPTRTFRSHKKDDRTARRR.

The protein belongs to the universal ribosomal protein uS19 family.

In terms of biological role, protein S19 forms a complex with S13 that binds strongly to the 16S ribosomal RNA. This chain is Small ribosomal subunit protein uS19, found in Rubrobacter xylanophilus (strain DSM 9941 / JCM 11954 / NBRC 16129 / PRD-1).